Consider the following 267-residue polypeptide: Ribosyldihydronicotinamide dehydrogenase-like protein traD (267 aa).

Residues His-9, 15 to 16 (LN), and 100 to 103 (LWWF) each bind FAD. 122-124 (GHG) serves as a coordination point for substrate. FAD contacts are provided by residues 152 to 155 (TLGG) and Tyr-160.

The protein belongs to the NAD(P)H dehydrogenase (quinone) family. Homodimer. FAD serves as cofactor.

Its pathway is secondary metabolite biosynthesis. Ribosyldihydronicotinamide dehydrogenase-like protein; part of the tra gene cluster that produces terrestric acid. The clavatol biosynthesis cluster cla and the terrestric acid cluster tra are both involved in the production of peniphenones and penilactones. The non-reducing PKS claF is responsible for the formation of clavatol from successive condensations of 3 malonyl-CoA units, presumably with a simple acetyl-CoA starter unit, and 2 methylation steps. The esterase claE probably collaborates with claF by catalyzing the hydrolysis of ACP-bound acyl intermediates to free the ACP from stalled intermediates. The clavatol oxidase claD then converts clavatol to hydroxyclavatol. Spontaneous dehydration of hydroxyclavatol leads to the accumulation of the highly active ortho-quinone methide. On the other hand, the PKS-NRPS hybrid traA is involved in the formation of crustosic acid, with the help of traB and traD. The polyketide synthase module (PKS) of traA is responsible for the synthesis of the polyketide backbone via the condensation of an acetyl-CoA starter unit with 3 malonyl-CoA units. The downstream nonribosomal peptide synthetase (NRPS) module then amidates the carboxyl end of the polyketide with L-malic acid. Because traA lacks a designated enoylreductase (ER) domain, the required activity is provided the enoyl reductase traG. Crustosic acid undergoes decarboxylation and isomerization to the terrestric acid, catalyzed by the 2-oxoglutarate-dependent dioxygenase traH. Both acids are further converted to the 2 gamma-butyrolactones (R)-5-methyltetronic acid and (S)-5-carboxylmethyltetronic acid, with involvement of the cytochrome P450 monooxygenase claJ. Spontaneous addition of the methide to these gamma-butyrolactones leads to peniphenone D and penilactone D, which undergo again stereospecific attacking by methide to give penilactones A and B. This Penicillium crustosum (Blue mold fungus) protein is Ribosyldihydronicotinamide dehydrogenase-like protein traD.